We begin with the raw amino-acid sequence, 1856 residues long: Golgi-specific brefeldin A-resistance guanine nucleotide exchange factor 1 (1856 aa).

The segment at 1 to 211 (MVDKNIYIIQ…EPKSYVGTNM (211 aa)) is DCB (dimerization and cyclophiln-binding); DCB:DCB domain and DCB:HUS domain interaction. Positions 1-378 (MVDKNIYIIQ…SVHDMDYVNP (378 aa)) are interaction with RAB1B. Disordered stretches follow at residues 215–256 (KMRA…NGAT) and 291–370 (DSGL…SASV). A compositionally biased stretch (basic residues) spans 227 to 241 (WKKQKRSPRPPRHMT). Residues 316 to 328 (RESTTTESGSNEI) show a composition bias toward polar residues. Residues serine 349 and serine 352 each carry the phosphoserine modification. Phosphothreonine is present on threonine 505. Residues 528-548 (RIPSFVTELYINYDCDYYCAN) are HUS (homology upstream of Sec7); DCB:HUS domain interaction. The disordered stretch occupies residues 601-626 (QEKKETSRPSYEAVDSTQEANSTERA). Polar residues predominate over residues 615–625 (DSTQEANSTER). In terms of domain architecture, SEC7 spans 690-880 (ELIEIKNKKK…EDMYHAIKNE (191 aa)). Residues 884-1370 (MPEEQTGLVR…LSRPSPSPLV (487 aa)) form a phosphatidylinositol-phosphate binding; required for translocation to the leading edge and for ARF1 activation upon GPCR signaling region. Over residues 1284–1294 (TARADAPDAGA) the composition is skewed to low complexity. Residues 1284–1333 (TARADAPDAGAQSDSELPSYHQNDVSLDRGYTSDSEVYTDHGRPGKIHRS) are disordered. The span at 1295-1308 (QSDSELPSYHQNDV) shows a compositional bias: polar residues. Serine 1296 is subject to Phosphoserine. At tyrosine 1314 the chain carries Phosphotyrosine. Residues serine 1316, serine 1318, and serine 1333 each carry the phosphoserine modification. The residue at position 1335 (threonine 1335) is a Phosphothreonine; by AMPK. 3 disordered regions span residues 1430–1484 (CKSQ…EGVP), 1739–1806 (THLT…PPLI), and 1837–1856 (PVPL…SEVN). The span at 1432 to 1446 (SQDKRGKSHKYDSKG) shows a compositional bias: basic and acidic residues. Phosphoserine occurs at positions 1475 and 1781. A compositionally biased stretch (low complexity) spans 1775-1793 (SSSSPGSPVASSPSRLSPS).

In terms of assembly, can form homodimers and probably homotetramers. Interacts with COPG1; the interaction is independent on ARF1 activation. Interacts with ARF1, ARF3, ARF4 and ARF5. Interacts with RAB1B (GTP-bound form); required for GBF1 membrane association. Interacts with GGA1, GGA2 and GGA3. Interacts with USO1. Interacts (via SEC7 domain) with PNPLA2 (via C-terminus); the interaction is direct. Can form homodimers and probably homotetramers. Interacts with COPG1; the interaction is independent on ARF1 activation. Interacts with ARF1, ARF3, ARF4 and ARF5. Interacts with RAB1B (GTP-bound form); required for GBF1 membrane association. Interacts with GGA1, GGA2 and GGA3. Interacts with USO1. Interacts (via SEC7 domain) with PNPLA2 (via C-terminus); the interaction is direct. Interacts with ARMH3.

Its subcellular location is the golgi apparatus. It is found in the cis-Golgi network. The protein resides in the endoplasmic reticulum-Golgi intermediate compartment. It localises to the trans-Golgi network. The protein localises to the cytoplasm. Its subcellular location is the lipid droplet. It is found in the membrane. Its activity is regulated as follows. Inhibited by brefeldin A (BFA). Inhibited by golgicide A (GCA). Guanine-nucleotide exchange factor (GEF) for members of the Arf family of small GTPases involved in trafficking in the early secretory pathway; its GEF activity initiates the coating of nascent vesicles via the localized generation of activated ARFs through replacement of GDP with GTP. Recruitment to cis-Golgi membranes requires membrane association of Arf-GDP and can be regulated by ARF1, ARF3, ARF4 and ARF5. Involved in the recruitment of the COPI coat complex to cellular membranes such as the endoplasmic reticulum exit sites (ERES), and the endoplasmic reticulum-Golgi intermediate (ERGIC) and cis-Golgi compartments implicating ARF1 activation. Involved in COPI vesicle-dependent retrograde transport from the ERGIC and cis-Golgi compartments to the endoplasmic reticulum (ER). Involved in the trans-Golgi network recruitment of GGA1, GGA2, GGA3, BIG1, BIG2, and the AP-1 adaptor protein complex related to chlathrin-dependent transport; the function requires its GEF activity (probably at least in part on ARF4 and ARF5). Has GEF activity towards ARF1. Has in vitro GEF activity towards ARF5. Involved in the processing of PSAP. Required for the assembly of the Golgi apparatus. The AMPK-phosphorylated form is involved in Golgi disassembly during mitotis and under stress conditions. May be involved in the COPI vesicle-dependent recruitment of PNPLA2 to lipid droplets. In neutrophils, involved in G protein-coupled receptor (GPCR)-mediated chemotaxis und superoxide production. Proposed to be recruited by phosphatidylinositol-phosphates generated upon GPCR stimulation to the leading edge where it recruits and activates ARF1, and is involved in recruitment of GIT2 and the NADPH oxidase complex. Plays a role in maintaining mitochondrial morphology. This is Golgi-specific brefeldin A-resistance guanine nucleotide exchange factor 1 (GBF1) from Cricetulus griseus (Chinese hamster).